The chain runs to 521 residues: MLNVPSQSFPAPRSQQRVASGGRSKVPLKQGRSLMDWIRLTKSGKDLTGLKGRLIEVTEEELKKHNKKDDCWICIRGFVYNVSPYMEYHPGGEDELMRAAGSDGTELFDQVHRWVNYESMLKECLVGRMAIKPAVLKDYREEEKKVLNGMLPKSQVTDTLAKEGPSYPSYDWFQTDSLVTIAIYTKQKDINLDSIIVDHQNDSFRAETIIKDCLYLIHIGLSHEVQEDFSVRVVESVGKIEIVLQKKENTSWDFLGHPLKNHNSLIPRKDTGLYYRKCQLISKEDVTHDTRLFCLMLPPSTHLQVPIGQHVYLKLPITGTEIVKPYTPVSGSLLSEFKEPVLPNNKYIYFLIKIYPTGLFTPELDRLQIGDFVSVSSPEGNFKISKFQELEDLFLLAAGTGFTPMVKILNYALTDIPSLRKVKLMFFNKTEDDIIWRSQLEKLAFKDKRLDVEFVLSAPISEWNGKQGHISPALLSEFLKRNLDKSKVLVCICGPVPFTEQGVRLLHDLNFSKNEIHSFTA.

Methionine 1 carries the post-translational modification N-acetylmethionine. Residues 1–18 (MLNVPSQSFPAPRSQQRV) show a composition bias toward polar residues. The tract at residues 1–27 (MLNVPSQSFPAPRSQQRVASGGRSKVP) is disordered. A Cytochrome b5 heme-binding domain is found at 54–130 (LIEVTEEELK…LKECLVGRMA (77 aa)). Heme-binding residues include histidine 89 and histidine 112. One can recognise a CS domain in the interval 165–256 (PSYPSYDWFQ…KENTSWDFLG (92 aa)). Residues 273–385 (LYYRKCQLIS…SSPEGNFKIS (113 aa)) enclose the FAD-binding FR-type domain. Residues 365–380 (DRLQ…SPEG) and 392–424 (DLFL…KVKL) contribute to the FAD site.

It belongs to the flavoprotein pyridine nucleotide cytochrome reductase family. The cofactor is FAD. In terms of tissue distribution, widely expressed.

The protein resides in the endoplasmic reticulum. The catalysed reaction is 2 Fe(III)-[cytochrome b5] + NADH = 2 Fe(II)-[cytochrome b5] + NAD(+) + H(+). NADH-cytochrome b5 reductase involved in endoplasmic reticulum stress response pathway. Plays a critical role in protecting pancreatic beta-cells against oxidant stress, possibly by protecting the cell from excess buildup of reactive oxygen species (ROS). Reduces a variety of substrates in vitro, such as cytochrome c, feericyanide and methemoglobin. This chain is Cytochrome b5 reductase 4, found in Homo sapiens (Human).